Consider the following 431-residue polypeptide: Transcription factor Sp7 (431 aa).

A disordered region spans residues 30–56 (SSPLRDSTTLGKAGTKKPYSVGSDLSA). N6-propionyllysine is present on residues K41 and K45. K58 is covalently cross-linked (Glycyl lysine isopeptide (Lys-Gly) (interchain with G-Cter in ubiquitin)). 2 disordered regions span residues 71–115 (TNGL…VPKG) and 154–260 (TPTP…SGGY). A 9aaTAD motif is present at residues 156–164 (TPWWDMHPG). Over residues 166-178 (NWLGGGQGQGDGL) the composition is skewed to gly residues. K230 participates in a covalent cross-link: Glycyl lysine isopeptide (Lys-Gly) (interchain with G-Cter in ubiquitin). 3 consecutive C2H2-type zinc fingers follow at residues 294-318 (HSCH…LRWH), 324-348 (FVCN…VRTH), and 354-376 (FTCL…QRTH). K361 and K371 each carry N6-propionyllysine. The interval 367–431 (DHLSKHQRTH…SPEQSNLLEI (65 aa)) is disordered. A compositionally biased stretch (polar residues) spans 403 to 412 (SQTPRPSASP).

This sequence belongs to the Sp1 C2H2-type zinc-finger protein family. As to quaternary structure, interacts with RIOX1; the interaction is direct and inhibits transcription activator activity. In terms of processing, ubiquitination at leads to proteasomal degradation. SP7 is a short-live protein with an endogenous half-life of approximately 12 hours. Post-translationally, propionylated. Depropionylation at Lys-371 by SIRT7 activates transcription factor activity and positively regulates bone formation by osteoblasts. Restricted to bone-derived cell.

Its subcellular location is the nucleus. In terms of biological role, transcriptional activator essential for osteoblast differentiation. Binds to SP1 and EKLF consensus sequences and to other G/C-rich sequences. This is Transcription factor Sp7 (SP7) from Homo sapiens (Human).